The following is a 226-amino-acid chain: Apoptosis regulator OPG045 (226 aa).

An essential and sufficient to inhibit host NLRP1 region spans residues 32–37; the sequence is NVDHDY.

Belongs to the orthopoxvirus OPG045 family. In terms of assembly, homodimer. Interacts with host pro-apoptotic protein BCL2L11 (via BH3 domain). Interacts with host NLRP1. Interacts with host BAK.

It is found in the host mitochondrion outer membrane. The protein localises to the host cytoplasm. In terms of biological role, plays a role in evading host innate immune response by inhibiting host inflammasome activation. Interacts with and inhibits NLR-mediated interleukin-1 beta/IL1B production in infected cells. At the host mitochondria outer membrane, interacts with the BH3 domain of host BAK and prevents BAK from binding active BAX. In turn, host apoptosis is inhibited. This Vaccinia virus (strain Western Reserve) (VACV) protein is Apoptosis regulator OPG045 (OPG045).